We begin with the raw amino-acid sequence, 72 residues long: NAD(P)H-quinone oxidoreductase subunit O (72 aa).

It belongs to the complex I NdhO subunit family. As to quaternary structure, NDH-1 can be composed of about 15 different subunits; different subcomplexes with different compositions have been identified which probably have different functions.

The protein resides in the cellular thylakoid membrane. It carries out the reaction a plastoquinone + NADH + (n+1) H(+)(in) = a plastoquinol + NAD(+) + n H(+)(out). The catalysed reaction is a plastoquinone + NADPH + (n+1) H(+)(in) = a plastoquinol + NADP(+) + n H(+)(out). Functionally, NDH-1 shuttles electrons from an unknown electron donor, via FMN and iron-sulfur (Fe-S) centers, to quinones in the respiratory and/or the photosynthetic chain. The immediate electron acceptor for the enzyme in this species is believed to be plastoquinone. Couples the redox reaction to proton translocation, and thus conserves the redox energy in a proton gradient. Cyanobacterial NDH-1 also plays a role in inorganic carbon-concentration. This Synechococcus sp. (strain JA-3-3Ab) (Cyanobacteria bacterium Yellowstone A-Prime) protein is NAD(P)H-quinone oxidoreductase subunit O.